The chain runs to 434 residues: Transcription initiation factor IIE subunit alpha (434 aa).

Residues 8 to 99 (VQRLIKMIMR…DFCSTIDSIK (92 aa)) enclose the HTH TFE/IIEalpha-type domain. The segment at 124–151 (CPFCNKKFSSLDVLSLVTNEGTFACNVC) adopts a C4-type zinc-finger fold. Disordered stretches follow at residues 217-251 (QQNL…EKRE), 357-408 (STDY…EMQE), and 415-434 (INGF…FEDV). Polar residues predominate over residues 226-238 (DVRLSTSSPSITV). Composition is skewed to basic and acidic residues over residues 241 to 251 (SADKETDEKRE) and 376 to 385 (IQNKRTKSIE). The span at 386–399 (ENNSLPPIVSTNGI) shows a compositional bias: polar residues. Over residues 419-434 (NEDDEDDEDEADFEDV) the composition is skewed to acidic residues.

Belongs to the TFIIE alpha subunit family. As to quaternary structure, TFIIE is a tetramer of two alpha (tfa1) and two beta (tfa2) subunits.

Its subcellular location is the nucleus. In terms of biological role, recruits TFIIH to the initiation complex and stimulates the RNA polymerase II C-terminal domain kinase and DNA-dependent ATPase activities of TFIIH. Both TFIIH and TFIIE are required for promoter clearance by RNA polymerase. The polypeptide is Transcription initiation factor IIE subunit alpha (tfa1) (Schizosaccharomyces pombe (strain 972 / ATCC 24843) (Fission yeast)).